The following is a 66-amino-acid chain: Large ribosomal subunit protein bL33c (66 aa).

Belongs to the bacterial ribosomal protein bL33 family.

The protein resides in the plastid. The polypeptide is Large ribosomal subunit protein bL33c (Cuscuta gronovii (Common dodder)).